Here is an 88-residue protein sequence, read N- to C-terminus: Protein K3 (88 aa).

One can recognise an S1 motif domain in the interval 8–82 (LPNAGDVIKG…TKGYIDVNYK (75 aa)). Binding to host EIF2AK2/PKR regions lie at residues 43–53 (SVKMHMDRYVE) and 74–79 (KGYIDV).

Belongs to the poxviridae K3 protein family. In terms of assembly, interacts with host EIF2AK2/PKR kinase.

Its function is as follows. Viral mimic of EIF2S1/eIF-2alpha that acts as a pseudosubstrate for EIF2AK2/PKR kinase. Inhibits therefore EIF2S1/eIF-2alpha phosphorylation by host EIF2AK2/PKR kinase and prevents protein synthesis shutoff. Determinant of host species specificity. The polypeptide is Protein K3 (Vaccinia virus (strain Western Reserve) (VACV)).